A 227-amino-acid polypeptide reads, in one-letter code: 2,3-bisphosphoglycerate-dependent phosphoglycerate mutase (227 aa).

Substrate-binding positions include 7–14 (RHGQSEWN), 20–21 (TG), Arg-59, 86–89 (ERHY), Lys-97, 113–114 (RR), and 182–183 (GN). The Tele-phosphohistidine intermediate role is filled by His-8. The active-site Proton donor/acceptor is Glu-86.

This sequence belongs to the phosphoglycerate mutase family. BPG-dependent PGAM subfamily. Homodimer.

The enzyme catalyses (2R)-2-phosphoglycerate = (2R)-3-phosphoglycerate. Its pathway is carbohydrate degradation; glycolysis; pyruvate from D-glyceraldehyde 3-phosphate: step 3/5. In terms of biological role, catalyzes the interconversion of 2-phosphoglycerate and 3-phosphoglycerate. This Neisseria meningitidis serogroup C (strain 053442) protein is 2,3-bisphosphoglycerate-dependent phosphoglycerate mutase.